Reading from the N-terminus, the 293-residue chain is Acetyl-coenzyme A carboxylase carboxyl transferase subunit beta (293 aa).

The CoA carboxyltransferase N-terminal domain occupies 29-293 (LWVKCSECSQ…GVKELAEANT (265 aa)). Positions 33, 36, 52, and 55 each coordinate Zn(2+). The segment at 33 to 55 (CSECSQVAYRKDLISNFNVCNNC) adopts a C4-type zinc-finger fold.

It belongs to the AccD/PCCB family. In terms of assembly, acetyl-CoA carboxylase is a heterohexamer composed of biotin carboxyl carrier protein (AccB), biotin carboxylase (AccC) and two subunits each of ACCase subunit alpha (AccA) and ACCase subunit beta (AccD). Zn(2+) is required as a cofactor.

It is found in the cytoplasm. It catalyses the reaction N(6)-carboxybiotinyl-L-lysyl-[protein] + acetyl-CoA = N(6)-biotinyl-L-lysyl-[protein] + malonyl-CoA. It functions in the pathway lipid metabolism; malonyl-CoA biosynthesis; malonyl-CoA from acetyl-CoA: step 1/1. Functionally, component of the acetyl coenzyme A carboxylase (ACC) complex. Biotin carboxylase (BC) catalyzes the carboxylation of biotin on its carrier protein (BCCP) and then the CO(2) group is transferred by the transcarboxylase to acetyl-CoA to form malonyl-CoA. The polypeptide is Acetyl-coenzyme A carboxylase carboxyl transferase subunit beta (Prochlorococcus marinus (strain AS9601)).